An 86-amino-acid chain; its full sequence is RNA-binding protein Hfq (86 aa).

Residues 9-68 (DPYLNVLRKERIPVSIYLVNGIKLQGQVESFDQFVVLLKNTVSQMVYKHAISTVVPSRPV) form the Sm domain.

Belongs to the Hfq family. In terms of assembly, homohexamer.

Its function is as follows. RNA chaperone that binds small regulatory RNA (sRNAs) and mRNAs to facilitate mRNA translational regulation in response to envelope stress, environmental stress and changes in metabolite concentrations. Also binds with high specificity to tRNAs. The polypeptide is RNA-binding protein Hfq (Saccharophagus degradans (strain 2-40 / ATCC 43961 / DSM 17024)).